A 233-amino-acid polypeptide reads, in one-letter code: Phosphoglycolate phosphatase (233 aa).

Asp-13 serves as the catalytic Nucleophile. Residues Asp-13, Asp-15, and Asp-175 each coordinate Mg(2+).

This sequence belongs to the HAD-like hydrolase superfamily. CbbY/CbbZ/Gph/YieH family. Mg(2+) is required as a cofactor.

It catalyses the reaction 2-phosphoglycolate + H2O = glycolate + phosphate. It participates in organic acid metabolism; glycolate biosynthesis; glycolate from 2-phosphoglycolate: step 1/1. In terms of biological role, specifically catalyzes the dephosphorylation of 2-phosphoglycolate. Is involved in the dissimilation of the intracellular 2-phosphoglycolate formed during the DNA repair of 3'-phosphoglycolate ends, a major class of DNA lesions induced by oxidative stress. This is Phosphoglycolate phosphatase from Agrobacterium fabrum (strain C58 / ATCC 33970) (Agrobacterium tumefaciens (strain C58)).